The following is a 401-amino-acid chain: Glutamyl-tRNA reductase (401 aa).

Substrate-binding positions include 45 to 48 (TCNR), Ser101, 106 to 108 (EDQ), and Gln112. Cys46 functions as the Nucleophile in the catalytic mechanism. 177–182 (GYGEVG) provides a ligand contact to NADP(+).

It belongs to the glutamyl-tRNA reductase family. In terms of assembly, homodimer.

The enzyme catalyses (S)-4-amino-5-oxopentanoate + tRNA(Glu) + NADP(+) = L-glutamyl-tRNA(Glu) + NADPH + H(+). It participates in porphyrin-containing compound metabolism; protoporphyrin-IX biosynthesis; 5-aminolevulinate from L-glutamyl-tRNA(Glu): step 1/2. Catalyzes the NADPH-dependent reduction of glutamyl-tRNA(Glu) to glutamate 1-semialdehyde (GSA). The protein is Glutamyl-tRNA reductase of Clostridium beijerinckii (strain ATCC 51743 / NCIMB 8052) (Clostridium acetobutylicum).